Here is a 445-residue protein sequence, read N- to C-terminus: MALLGNFLCCLLVAWLCGPGLGVPLAPADRAPAVGQFWHVTDLHLDPTYHITDDRTKVCASSKGANASNPGPFGDVLCDSPYQLILSAFDFIKNSGQEASFMIWTGDSPPHVPVPELSTGTVIKVITNMTMTVQNLFPNLQVFPALGNHDYWPQDQLPIVTSKVYSAVADLWKPWLGEEAISTLKKGGFYSQKVASNPGLRIISLNTNLYYGPNIMTLNKTDPANQFEWLENTLNSSLWNKEKVYIIAHVPVGYLPYATDTPAIRQYYNEKLLDIFRRYSSVIAGQFYGHTHRDSLMVLSDKNGNPLNSVFVAPAVTPVKGVLQKETNNPGVRLFQYKPGDYTLLDMVQYYLNLTEANLKGESNWTLEYVLTQAYSVADLQPKSLYALVQQFATKDSKQFLKYYHYYFVSYDSSATCDQHCKTLQVCAIMNLDSMSYDDCLKQHL.

A signal peptide spans 1-22; sequence MALLGNFLCCLLVAWLCGPGLG. Positions 42 and 44 each coordinate Zn(2+). A disulfide bridge connects residues Cys-59 and Cys-78. N-linked (GlcNAc...) asparagine glycosylation is present at Asn-66. Asp-107 provides a ligand contact to Zn(2+). Residue His-111 participates in ATP binding. The N-linked (GlcNAc...) asparagine glycan is linked to Asn-128. Asn-148 provides a ligand contact to Zn(2+). Residues Asn-148 and His-149 each coordinate ATP. Asn-219 and Asn-235 each carry an N-linked (GlcNAc...) asparagine glycan. His-249 is a binding site for Zn(2+). Tyr-257 contributes to the ATP binding site. Residues His-290 and His-292 each coordinate Zn(2+). N-linked (GlcNAc...) asparagine glycans are attached at residues Asn-353 and Asn-364. 2 cysteine pairs are disulfide-bonded: Cys-417/Cys-421 and Cys-427/Cys-440.

This sequence belongs to the acid sphingomyelinase family. As to quaternary structure, monomer. Homodimer; homodimerizes following 2',3'-cGAMP-binding. Zn(2+) serves as cofactor. N-glycosylated. Detected in blood serum (at protein level).

It is found in the secreted. The enzyme catalyses 2',3'-cGAMP + H2O = 5'-pGpA(2'-5') + H(+). It catalyses the reaction 5'-pGpA(2'-5') + H2O = 5'-GpA(2'-5') + phosphate. It carries out the reaction a ribonucleoside 5'-triphosphate + H2O = a ribonucleoside 5'-diphosphate + phosphate + H(+). The catalysed reaction is ATP + H2O = ADP + phosphate + H(+). Its activity is regulated as follows. Requires micromolar levels of Zn(2+) for activity. Inhibited by millimolar levels of Zn(2+). Cyclic-nucleotide phosphodiesterase that acts as a negative regulator of innate immunity by mediating degradation of 2',3'-cGAMP, thereby inhibiting the cGAS-STING signaling. Specifically linearizes 2',3'-cGAMP into 2'5'-bond pGpA and further hydrolyzes pGpA to produce GpA. Also has in vitro nucleotide phosphodiesterase activity with nucleoside triphosphates, such as ATP. Has in vitro activity with p-nitrophenyl-TMP. Has lower activity with nucleoside diphosphates, and no activity with nucleoside monophosphates. Has in vitro activity with CDP-choline, giving rise to CMP and phosphocholine. Has in vitro activity with CDP-ethanolamine. Does not have sphingomyelin phosphodiesterase activity. This chain is Cyclic GMP-AMP phosphodiesterase SMPDL3A, found in Mus musculus (Mouse).